The following is a 143-amino-acid chain: Beta/delta-urticatoxin-Uf2b (143 aa).

The first 18 residues, 1-18, serve as a signal peptide directing secretion; that stretch reads MGAIVLVALMALVASSSA. Positions 19-80 are excised as a propeptide; that stretch reads FSDIEHNIMK…MMLSGRPQPN (62 aa). Intrachain disulfides connect Cys-83–Cys-100, Cys-90–Cys-105, Cys-99–Cys-113, Cys-115–Cys-129, Cys-122–Cys-134, and Cys-128–Cys-142.

The protein belongs to the urticatoxin-2 family. As to expression, expressed in trichomes, that are stiff epidermal hairs located on the surface of petioles and leaves.

The protein resides in the secreted. In terms of biological role, plant defense neurotoxin that causes pain and systemic symptoms in mammals via modulation of voltage-gated sodium channels (Nav). Potent modulator of human Nav1.5/SCN5A (EC(50)=55 nM), Nav1.6/SCN8A (EC(50)=0.86 nM), and Nav1.7/SCN9A (EC(50)=208 nM), where it shifts the activation threshold to more negative potentials and delays fast inactivation. Also shifts the voltage-dependence of steady-state fast inactivation of Nav1.6/SCN8A, but not that of Nav1.5/SCN5A or Nav1.7/SCN9A. On Nav1.7/SCN9A, principally acts by binding to extracellular loops of domain IV (Nav site 3). In vivo, intraplantar injection into mice causes numerous dose-dependent, immediate, and long-lasting spontaneous pain behaviors, while no swelling is observed in the injected paw. At the highest doses tested, systemic symptoms including hypokinesia and hypersalivation are observed. The polypeptide is Beta/delta-urticatoxin-Uf2b (Urtica ferox (Tree nettle)).